Consider the following 656-residue polypeptide: uncharacterized protein (656 aa).

Positions 623 to 656 are disordered; sequence EIDIPGTPASIDPEWSRPPGSITDDHVFDAPLHR. Residues 645–656 show a composition bias toward basic and acidic residues; it reads TDDHVFDAPLHR.

This is an uncharacterized protein from Mycobacterium tuberculosis (strain ATCC 25618 / H37Rv).